The chain runs to 79 residues: Small ribosomal subunit protein bS18 (79 aa).

This sequence belongs to the bacterial ribosomal protein bS18 family. In terms of assembly, part of the 30S ribosomal subunit. Forms a tight heterodimer with protein bS6.

In terms of biological role, binds as a heterodimer with protein bS6 to the central domain of the 16S rRNA, where it helps stabilize the platform of the 30S subunit. In Streptococcus pyogenes serotype M49 (strain NZ131), this protein is Small ribosomal subunit protein bS18.